We begin with the raw amino-acid sequence, 335 residues long: Tetraacyldisaccharide 4'-kinase (335 aa).

ATP is bound at residue 59–66 (TAGGNGKT).

The protein belongs to the LpxK family.

It carries out the reaction a lipid A disaccharide + ATP = a lipid IVA + ADP + H(+). It participates in glycolipid biosynthesis; lipid IV(A) biosynthesis; lipid IV(A) from (3R)-3-hydroxytetradecanoyl-[acyl-carrier-protein] and UDP-N-acetyl-alpha-D-glucosamine: step 6/6. In terms of biological role, transfers the gamma-phosphate of ATP to the 4'-position of a tetraacyldisaccharide 1-phosphate intermediate (termed DS-1-P) to form tetraacyldisaccharide 1,4'-bis-phosphate (lipid IVA). The polypeptide is Tetraacyldisaccharide 4'-kinase (Vibrio campbellii (strain ATCC BAA-1116)).